We begin with the raw amino-acid sequence, 173 residues long: Large ribosomal subunit protein uL10 (173 aa).

This sequence belongs to the universal ribosomal protein uL10 family. In terms of assembly, part of the ribosomal stalk of the 50S ribosomal subunit. The N-terminus interacts with L11 and the large rRNA to form the base of the stalk. The C-terminus forms an elongated spine to which L12 dimers bind in a sequential fashion forming a multimeric L10(L12)X complex.

Functionally, forms part of the ribosomal stalk, playing a central role in the interaction of the ribosome with GTP-bound translation factors. This chain is Large ribosomal subunit protein uL10, found in Bifidobacterium longum (strain DJO10A).